The sequence spans 435 residues: ATP-dependent protease ATPase subunit HslU (435 aa).

Residues I18, G60–E65, D248, E313, and R385 each bind ATP.

It belongs to the ClpX chaperone family. HslU subfamily. As to quaternary structure, a double ring-shaped homohexamer of HslV is capped on each side by a ring-shaped HslU homohexamer. The assembly of the HslU/HslV complex is dependent on binding of ATP.

The protein localises to the cytoplasm. ATPase subunit of a proteasome-like degradation complex; this subunit has chaperone activity. The binding of ATP and its subsequent hydrolysis by HslU are essential for unfolding of protein substrates subsequently hydrolyzed by HslV. HslU recognizes the N-terminal part of its protein substrates and unfolds these before they are guided to HslV for hydrolysis. The sequence is that of ATP-dependent protease ATPase subunit HslU from Rhizobium meliloti (strain 1021) (Ensifer meliloti).